A 360-amino-acid chain; its full sequence is Protein RecA (360 aa).

69–76 (GPESSGKT) contacts ATP.

This sequence belongs to the RecA family.

It is found in the cytoplasm. In terms of biological role, can catalyze the hydrolysis of ATP in the presence of single-stranded DNA, the ATP-dependent uptake of single-stranded DNA by duplex DNA, and the ATP-dependent hybridization of homologous single-stranded DNAs. It interacts with LexA causing its activation and leading to its autocatalytic cleavage. The chain is Protein RecA from Trichodesmium erythraeum (strain IMS101).